The primary structure comprises 303 residues: Methionyl-tRNA formyltransferase (303 aa).

Ser-108–Pro-111 lines the (6S)-5,6,7,8-tetrahydrofolate pocket.

This sequence belongs to the Fmt family.

The enzyme catalyses L-methionyl-tRNA(fMet) + (6R)-10-formyltetrahydrofolate = N-formyl-L-methionyl-tRNA(fMet) + (6S)-5,6,7,8-tetrahydrofolate + H(+). Its function is as follows. Attaches a formyl group to the free amino group of methionyl-tRNA(fMet). The formyl group appears to play a dual role in the initiator identity of N-formylmethionyl-tRNA by promoting its recognition by IF2 and preventing the misappropriation of this tRNA by the elongation apparatus. The protein is Methionyl-tRNA formyltransferase of Rickettsia peacockii (strain Rustic).